Here is a 1039-residue protein sequence, read N- to C-terminus: Probable inorganic carbon transporter subunit DabA 2 (1039 aa).

Residues cysteine 462, aspartate 464, histidine 721, and cysteine 736 each coordinate Zn(2+).

It belongs to the inorganic carbon transporter (TC 9.A.2) DabA family. Forms a complex with DabB. Zn(2+) serves as cofactor.

It localises to the cell inner membrane. Part of an energy-coupled inorganic carbon pump. The chain is Probable inorganic carbon transporter subunit DabA 2 from Nitrobacter hamburgensis (strain DSM 10229 / NCIMB 13809 / X14).